Consider the following 291-residue polypeptide: Acetyl-coenzyme A carboxylase carboxyl transferase subunit beta (291 aa).

Positions 34-291 (MWTKCSNCNS…LILHGVNKYE (258 aa)) constitute a CoA carboxyltransferase N-terminal domain. C38, C41, C57, and C60 together coordinate Zn(2+). A C4-type zinc finger spans residues 38–60 (CSNCNSMIYYEDLENNKYVCTKC).

It belongs to the AccD/PCCB family. Acetyl-CoA carboxylase is a heterohexamer composed of biotin carboxyl carrier protein (AccB), biotin carboxylase (AccC) and two subunits each of ACCase subunit alpha (AccA) and ACCase subunit beta (AccD). It depends on Zn(2+) as a cofactor.

Its subcellular location is the cytoplasm. It carries out the reaction N(6)-carboxybiotinyl-L-lysyl-[protein] + acetyl-CoA = N(6)-biotinyl-L-lysyl-[protein] + malonyl-CoA. It participates in lipid metabolism; malonyl-CoA biosynthesis; malonyl-CoA from acetyl-CoA: step 1/1. Functionally, component of the acetyl coenzyme A carboxylase (ACC) complex. Biotin carboxylase (BC) catalyzes the carboxylation of biotin on its carrier protein (BCCP) and then the CO(2) group is transferred by the transcarboxylase to acetyl-CoA to form malonyl-CoA. The protein is Acetyl-coenzyme A carboxylase carboxyl transferase subunit beta of Clostridium botulinum (strain Alaska E43 / Type E3).